A 174-amino-acid polypeptide reads, in one-letter code: ATP-dependent protease subunit HslV (174 aa).

Thr2 is a catalytic residue. Gly157, Cys160, and Thr163 together coordinate Na(+).

This sequence belongs to the peptidase T1B family. HslV subfamily. As to quaternary structure, a double ring-shaped homohexamer of HslV is capped on each side by a ring-shaped HslU homohexamer. The assembly of the HslU/HslV complex is dependent on binding of ATP.

The protein localises to the cytoplasm. The catalysed reaction is ATP-dependent cleavage of peptide bonds with broad specificity.. Its activity is regulated as follows. Allosterically activated by HslU binding. Functionally, protease subunit of a proteasome-like degradation complex believed to be a general protein degrading machinery. The chain is ATP-dependent protease subunit HslV from Shewanella denitrificans (strain OS217 / ATCC BAA-1090 / DSM 15013).